A 254-amino-acid polypeptide reads, in one-letter code: Adenosylcobinamide-GDP ribazoletransferase (254 aa).

6 helical membrane passes run 36–56, 61–81, 114–134, 138–158, 197–217, and 232–252; these read YYPL…TLLL, PLVT…GIHL, ALSA…LLAL, LVPY…LIGV, WVLQ…ILLF, and LYGA…FPLL.

The protein belongs to the CobS family. It depends on Mg(2+) as a cofactor.

It is found in the cell membrane. The catalysed reaction is alpha-ribazole + adenosylcob(III)inamide-GDP = adenosylcob(III)alamin + GMP + H(+). The enzyme catalyses alpha-ribazole 5'-phosphate + adenosylcob(III)inamide-GDP = adenosylcob(III)alamin 5'-phosphate + GMP + H(+). Its pathway is cofactor biosynthesis; adenosylcobalamin biosynthesis; adenosylcobalamin from cob(II)yrinate a,c-diamide: step 7/7. Joins adenosylcobinamide-GDP and alpha-ribazole to generate adenosylcobalamin (Ado-cobalamin). Also synthesizes adenosylcobalamin 5'-phosphate from adenosylcobinamide-GDP and alpha-ribazole 5'-phosphate. The sequence is that of Adenosylcobinamide-GDP ribazoletransferase from Desulfitobacterium hafniense (strain Y51).